The primary structure comprises 213 residues: GTP cyclohydrolase 1 (213 aa).

The Zn(2+) site is built by C104, H107, and C175.

Belongs to the GTP cyclohydrolase I family. As to quaternary structure, homomer.

The enzyme catalyses GTP + H2O = 7,8-dihydroneopterin 3'-triphosphate + formate + H(+). It functions in the pathway cofactor biosynthesis; 7,8-dihydroneopterin triphosphate biosynthesis; 7,8-dihydroneopterin triphosphate from GTP: step 1/1. The chain is GTP cyclohydrolase 1 from Brucella canis (strain ATCC 23365 / NCTC 10854 / RM-666).